Reading from the N-terminus, the 1794-residue chain is Non-reducing polyketide synthase nscA (1794 aa).

Residues 19–256 (DLKDLFRRLH…PLPVYDGLCH (238 aa)) form an N-terminal acylcarrier protein transacylase domain (SAT) region. The 434-residue stretch at 389-822 (ASKLAIVGMA…GGNTTVLLED (434 aa)) folds into the Ketosynthase family 3 (KS3) domain. Residues 427–448 (PDRFDLNTHYDPTGKTENATQT) form a disordered region. Over residues 428-440 (DRFDLNTHYDPTG) the composition is skewed to basic and acidic residues. Catalysis depends on for beta-ketoacyl synthase activity residues Cys562, His697, and His740. Positions 928-1249 (FTGQGAYYSG…LVTLHLAGLT (322 aa)) are malonyl-CoA:ACP transacylase (MAT) domain. Residues 1314-1633 (TSLVHQITAE…RLLMDRFFSP (320 aa)) form a product template (PT) domain region. The tract at residues 1318 to 1454 (HQITAETVEA…GVVRFEDPAA (137 aa)) is N-terminal hotdog fold. The PKS/mFAS DH domain maps to 1318 to 1628 (HQITAETVEA…FRRVPRLLMD (311 aa)). His1350 acts as the Proton acceptor; for dehydratase activity in catalysis. Residues 1482–1628 (ASKLSKPLAY…FRRVPRLLMD (147 aa)) form a C-terminal hotdog fold region. Asp1539 (proton donor; for dehydratase activity) is an active-site residue. Disordered stretches follow at residues 1637–1665 (SHAEKQLQETAPSATSVKKSTPPAAEAPA) and 1682–1718 (ASKSEVSTPPLTPPSQQESPGESAVITPATSDRGDPV). Composition is skewed to polar residues over residues 1644–1655 (QETAPSATSVKK) and 1685–1701 (SEVSTPPLTPPSQQESP). A Carrier domain is found at 1717–1794 (PVDAGVVGQC…EMTAWLEEYC (78 aa)). Ser1754 carries the O-(pantetheine 4'-phosphoryl)serine modification.

Requires pantetheine 4'-phosphate as cofactor.

It participates in secondary metabolite biosynthesis. Non-reducing polyketide synthase; part of the gene cluster that mediates the biosynthesis of neosartoricin, a prenylated anthracenone that exhibits T-cell antiproliferative activity, suggestive of a physiological role as an immunosuppressive agent. The non-reducing polyketide synthase nscA probably synthesizes and cyclizes the decaketide backbone. The hydrolase nscB then mediates the product release through hydrolysis followed by spontaneous decarboxylation. The prenyltransferase nscD catalyzes the addition of the dimethylallyl group to the aromatic C5. The FAD-dependent monooxygenase nscC is then responsible for the stereospecific hydroxylation at C2. There is no gene encoding O-acetyltransferase in the nsc gene cluster; thus, the last step of 2-O-acetylation leading to neosartoricin may be catalyzed by an unidentified O-acetyltransferase. This Neosartorya fischeri (strain ATCC 1020 / DSM 3700 / CBS 544.65 / FGSC A1164 / JCM 1740 / NRRL 181 / WB 181) (Aspergillus fischerianus) protein is Non-reducing polyketide synthase nscA.